A 68-amino-acid chain; its full sequence is Small ribosomal subunit protein bS21 (68 aa).

The protein belongs to the bacterial ribosomal protein bS21 family.

In Jannaschia sp. (strain CCS1), this protein is Small ribosomal subunit protein bS21.